The sequence spans 525 residues: Light-independent protochlorophyllide reductase subunit B (525 aa).

Asp36 serves as a coordination point for [4Fe-4S] cluster. Asp274 acts as the Proton donor in catalysis. Position 409 to 410 (409 to 410 (GL)) interacts with substrate. Residues 433 to 464 (HGGKAVAREESPVAPADLAPAATSDTPAAPSP) are disordered. The span at 444-464 (PVAPADLAPAATSDTPAAPSP) shows a compositional bias: low complexity.

Belongs to the ChlB/BchB/BchZ family. Protochlorophyllide reductase is composed of three subunits; BchL, BchN and BchB. Forms a heterotetramer of two BchB and two BchN subunits. The cofactor is [4Fe-4S] cluster.

It catalyses the reaction chlorophyllide a + oxidized 2[4Fe-4S]-[ferredoxin] + 2 ADP + 2 phosphate = protochlorophyllide a + reduced 2[4Fe-4S]-[ferredoxin] + 2 ATP + 2 H2O. It functions in the pathway porphyrin-containing compound metabolism; bacteriochlorophyll biosynthesis (light-independent). Component of the dark-operative protochlorophyllide reductase (DPOR) that uses Mg-ATP and reduced ferredoxin to reduce ring D of protochlorophyllide (Pchlide) to form chlorophyllide a (Chlide). This reaction is light-independent. The NB-protein (BchN-BchB) is the catalytic component of the complex. This Rhodobacter capsulatus (strain ATCC BAA-309 / NBRC 16581 / SB1003) protein is Light-independent protochlorophyllide reductase subunit B.